The following is a 440-amino-acid chain: uncharacterized protein (440 aa).

A signal peptide spans 1 to 29 (MLRLQMMEGLIVKRTLLLILLLVISVSYA).

Belongs to the Mj S-layer protein family.

This is an uncharacterized protein from Methanocaldococcus jannaschii (strain ATCC 43067 / DSM 2661 / JAL-1 / JCM 10045 / NBRC 100440) (Methanococcus jannaschii).